Consider the following 364-residue polypeptide: Homeobox protein KNOX3 (364 aa).

The segment at 13–49 is disordered; that stretch reads TAHGQHHSQLPWGSSPLSAVISPPPQQQQQHQQQSAG. The span at 19-29 shows a compositional bias: polar residues; it reads HSQLPWGSSPL. One can recognise an ELK domain in the interval 246-266; it reads ELKHHLLKKYSGYLSSLKQEL. A DNA-binding region (homeobox; TALE-type) is located at residues 267–330; sequence SKKKKKGKLP…NQRKRHWKPT (64 aa).

It belongs to the TALE/KNOX homeobox family. In terms of assembly, binds DNA as a monomer. In terms of tissue distribution, the unit of inflorescence is the spikelet, which bears a fertile tract, the lemma, and the floret consisting of palea, two lodicules, three stamens and the pistil. The lemma is completed by the awn, an appendage homologous to the laminae of normal leaves. Expressed in the inflorescences and lemmas and at lower levels, in palea and vascular bundles.

Its subcellular location is the nucleus. May play a role in meristem formation and/or maintenance. Overexpression causes the hooded phenotype characterized by the appearance of an extra flower of inverse polarity on the lemma. Binds to the DNA sequence 5'-TGAC-3'. The sequence is that of Homeobox protein KNOX3 (KNOX3) from Hordeum vulgare (Barley).